The chain runs to 75 residues: U6-lycotoxin-Ls1a (75 aa).

The signal sequence occupies residues 1-21; sequence MKLLLFTALVLVVISLIEVEA. A propeptide spanning residues 22–25 is cleaved from the precursor; that stretch reads ENER.

The protein belongs to the neurotoxin 19 (CSTX) family. 06 (U6-Lctx) subfamily. Post-translationally, contains 4 disulfide bonds. As to expression, expressed by the venom gland.

The protein resides in the secreted. This is U6-lycotoxin-Ls1a from Lycosa singoriensis (Wolf spider).